Here is a 307-residue protein sequence, read N- to C-terminus: MRQLFVLDPLSQIRPEKDSTAALMQAAQRAGDDIWSCTPSDLIARGDEPMAVALPVTPDPWIAVGAPERQSLAGFDVIWMRKDPPVDEAYLYATHLLEVAERAGVRVLNRPSALRAWNEKLGALRFSRWMAPTLVAGRVSELMAFAREQGDVVLKPLGGRAGLGVIRVQAEAPGLKALLELVTEQERLPVMAQRFLPDVTEGDKRILLVDGDPLGAVNRRPSEGEFRSNLAVGGQAEATELSEPERQICAALAPALRAEGLFFVGIDVIGGMLSEINVTSPTGVREVERLMQEPLADQTIERLRSLV.

In terms of domain architecture, ATP-grasp spans 120 to 304 (KLGALRFSRW…LADQTIERLR (185 aa)). Residue 146–202 (AREQGDVVLKPLGGRAGLGVIRVQAEAPGLKALLELVTEQERLPVMAQRFLPDVTEG) participates in ATP binding. Residues E275 and N277 each contribute to the Mg(2+) site.

This sequence belongs to the prokaryotic GSH synthase family. The cofactor is Mg(2+). Mn(2+) is required as a cofactor.

It carries out the reaction gamma-L-glutamyl-L-cysteine + glycine + ATP = glutathione + ADP + phosphate + H(+). Its pathway is sulfur metabolism; glutathione biosynthesis; glutathione from L-cysteine and L-glutamate: step 2/2. In Parasynechococcus marenigrum (strain WH8102), this protein is Glutathione synthetase.